The chain runs to 233 residues: Hydroxyacylglutathione hydrolase (233 aa).

Zn(2+) is bound by residues H52, H54, D56, H57, H108, D125, and H163.

The protein belongs to the metallo-beta-lactamase superfamily. Glyoxalase II family. As to quaternary structure, monomer. Requires Zn(2+) as cofactor.

It carries out the reaction an S-(2-hydroxyacyl)glutathione + H2O = a 2-hydroxy carboxylate + glutathione + H(+). The protein operates within secondary metabolite metabolism; methylglyoxal degradation; (R)-lactate from methylglyoxal: step 2/2. Functionally, thiolesterase that catalyzes the hydrolysis of S-D-lactoyl-glutathione to form glutathione and D-lactic acid. This chain is Hydroxyacylglutathione hydrolase, found in Pasteurella multocida (strain Pm70).